Consider the following 421-residue polypeptide: MFEGRPRDSCLVSTLFTMPSHKETKWSFLVSGKRSFLNNDESDLHFKKMYKLTTDSSEGEDNGSSSDSGTLIPGMNRDDSLSCLIRCSRADYCSIASVNRSLRSLIRSGEIYRLRRLQGTLEHWVYFSCHLNEWEAFDPRSKRWMHLPSMPQNECFRYADKESLAVGTDLLVFGWEVSSYVIYRYSLLTNSWSTAKSMNMPRCLFGSASYGEIAVLAGGCDSSGRILDTAELYNYEDQTWLVLPGMNKRRKMCSGVFMDGKFYVIGGIGVGEENEPKVLTCGEEFDLKTRKWTEIPEMSPPRSNQGNGMSAAAMAPPLVAVVNDQLYAADHAGMAVRRYDKEKRVWNKVGNLPEQAGSMNGWGLAFRACGDRIIVIGGPKAPGEGFIELNSWVPSVTTPEWHLLGKKQSVNFVYNCAVMSC.

A disordered region spans residues 54–73 (TDSSEGEDNGSSSDSGTLIP). In terms of domain architecture, F-box spans 70-117 (TLIPGMNRDDSLSCLIRCSRADYCSIASVNRSLRSLIRSGEIYRLRRL). 5 Kelch repeats span residues 114–167 (LRRL…LAVG), 169–212 (DLLV…SYGE), 213–260 (IAVL…FMDG), 261–312 (KFYV…MSAA), and 320–366 (AVVN…GLAF).

In Arabidopsis thaliana (Mouse-ear cress), this protein is F-box/kelch-repeat protein At1g26930.